The sequence spans 82 residues: Small ribosomal subunit protein bS16 (82 aa).

Belongs to the bacterial ribosomal protein bS16 family.

The protein is Small ribosomal subunit protein bS16 of Mannheimia succiniciproducens (strain KCTC 0769BP / MBEL55E).